The following is a 461-amino-acid chain: E3 ubiquitin-protein ligase parkin (461 aa).

The 61-residue stretch at 30 to 90 (VNIYVKSNVG…DSTVIEVLDF (61 aa)) folds into the Ubiquitin-like domain. S92 is modified (phosphoserine). An RING-type 0; atypical zinc finger spans residues 145 to 227 (AHFFIYCANP…SQGENDTAVP (83 aa)). Zn(2+) contacts are provided by C151, C155, C167, and C170. T176 is subject to Phosphothreonine. Residues C197, C202, C213, H216, C240, C243, C255, H259, C262, C265, C291, C295, C334, C339, C354, C356, C361, C364, H369, C373, C415, and C418 each contribute to the Zn(2+) site. Residues 236 to 461 (KKIPCLACTD…RDCMASHWFG (226 aa)) are TRIAD supradomain. The segment at 240–295 (CLACTDICDPVLVFSCDNRHVTCLECFKNYCGSRLKDRQFLSHPDFGYTLPCPAGC) adopts an RING-type 1 zinc-finger fold. IBR-type zinc fingers lie at residues 315–373 (EQYH…LGEC) and 411–452 (LTKP…PWER). The segment at 415–446 (CPKCRTSTERAGGCMHMICTRANCGFHWCWVC) adopts an RING-type 2; atypical zinc-finger fold. C428 is an active-site residue. Residues C433, C438, C443, C446, C454, and H458 each contribute to the Zn(2+) site.

This sequence belongs to the RBR family. Parkin subfamily. As to quaternary structure, forms an E3 ubiquitin ligase complex with E2 ubiquitin-conjugating enzymes. Post-translationally, auto-ubiquitinates in an E2-dependent manner leading to its own degradation. In terms of processing, phosphorylated. Activation requires phosphorylation at Ser-92 by Pink1 and binding to Pink1-phosphorylated polyubiquitin chains. Phosphorylation at Thr-176 by Pink1 is also important for mitochondrial localization.

It is found in the mitochondrion. Its subcellular location is the cytoplasm. The protein localises to the cytosol. It carries out the reaction [E2 ubiquitin-conjugating enzyme]-S-ubiquitinyl-L-cysteine + [acceptor protein]-L-lysine = [E2 ubiquitin-conjugating enzyme]-L-cysteine + [acceptor protein]-N(6)-ubiquitinyl-L-lysine.. Its pathway is protein modification; protein ubiquitination. With respect to regulation, in the autoinhibited state the side chain of Phe-460 inserts into a hydrophobic groove in RING-0, occluding the ubiquitin acceptor site Cys-428, whereas the REP repressor element binds RING-1 and blocks its E2-binding site. Activation of park requires 2 steps: (1) phosphorylation at Ser-92 by Pink1 and (2) binding to phosphorylated ubiquitin, leading to unlock repression of the catalytic Cys-428 by the RING-0 region via an allosteric mechanism and converting park to its fully-active form. According to another report, phosphorylation at Ser-92 by Pink1 is not essential for activation and only binding to phosphorylated ubiquitin is essential to unlock repression. In terms of biological role, E3 ubiquitin-protein ligase which accepts ubiquitin from E2 ubiquitin-conjugating enzymes in the form of a thioester and then directly transfers the ubiquitin to targeted substrates, such as Marf, Opa1, Sep1, Tom20 and porin. Mediates monoubiquitination as well as 'Lys-6', 'Lys-11', 'Lys-48'-linked and 'Lys-63'-linked polyubiquitination of substrates, depending on the context. Protects against mitochondrial dysfunction during cellular stress, by acting downstream of Pink1, to coordinate mitochondrial quality control mechanisms that remove and replace dysfunctional mitochondrial components. Depending on the severity of mitochondrial damage and/or dysfunction, activity ranges from preventing apoptosis and stimulating mitochondrial biogenesis to regulating mitochondrial dynamics and eliminating severely damaged mitochondria via mitophagy. Appears to be particularly important in maintaining the physiology and function of cells with high energy demands that are undergoing stress or altered metabolic environment, including spermatids, muscle cells and neurons such as the dopaminergic (DA) neurons. Activation and recruitment onto the outer membrane of damaged/dysfunctional mitochondria (OMM) requires Pink1-mediated phosphorylation of both park and ubiquitin. In depolarized mitochondria, mediates the decision between mitophagy or preventing apoptosis by inducing either the poly- or monoubiquitination of porin/VDAC; polyubiquitination of porin promotes mitophagy, while monoubiquitination of porin decreases mitochondrial calcium influx which ultimately inhibits apoptosis. When cellular stress results in irreversible mitochondrial damage, promotes the autophagic degradation of dysfunctional depolarized mitochondria (mitophagy) by promoting the ubiquitination of mitochondrial proteins. Preferentially assembles 'Lys-6'-, 'Lys-11'- and 'Lys-63'-linked polyubiquitin chains following mitochondrial damage, leading to mitophagy. In developing tissues, inhibits JNK-mediated apoptosis by negatively regulating bsk transcription. The Pink1-park pathway also promotes fission and/or inhibits fusion of damaged mitochondria by mediating the ubiquitination and subsequent degradation of proteins involved in mitochondrial fusion/fission such as Marf and Opa1. This prevents the refusion of unhealthy mitochondria with the healthy mitochondrial network and/or initiates mitochondrial fragmentation facilitating their later engulfment by autophagosomes. Regulates motility of damaged mitochondria by phosphorylating Miro which likely promotes its park-dependent degradation by the proteasome; in motor neurons, this inhibits mitochondrial intracellular anterograde transport along the axons which probably increases the chance of the mitochondria being eliminated in the soma. The Pink1-park pathway is also involved in mitochondrial regeneration processes such as promoting mitochondrial biogenesis, activating localized mitochondrial repair, promoting selective turnover of mitochondrial proteins and initiating the mitochondrial import of endogenous proteins. Involved in mitochondrial biogenesis via the ubiquitination of transcriptional repressor Paris which leads to its subsequent proteasomal degradation and allows activation of the transcription factor srl. Promotes localized mitochondrial repair by activating the translation of specific nuclear-encoded mitochondrial RNAs (nc-mtRNAs) on the mitochondrial surface, including several key electron transport chain component nc-mtRNAs. In Pediculus humanus subsp. corporis (Body louse), this protein is E3 ubiquitin-protein ligase parkin.